A 639-amino-acid polypeptide reads, in one-letter code: Far upstream element-binding protein 1 (639 aa).

2 disordered regions span residues 1–27 (MADY…NDAF) and 40–88 (KIGG…LPPM). At A2 the chain carries N-acetylalanine. Positions 14-23 (SAGGGGGGGV) are enriched in gly residues. A phosphoserine mark is found at S48 and S51. Positions 61 to 73 (RPLEDGDQPDAKK) are enriched in basic and acidic residues. KH domains follow at residues 95 to 159 (VMTE…KRLL), 180 to 246 (NAVQ…KEMV), and 270 to 334 (NEGI…AEII). S135 is subject to Phosphoserine. T148 is subject to Phosphothreonine. Residues R316, R354, R356, and R358 each carry the omega-N-methylarginine modification. A disordered region spans residues 341–360 (VQAGNPGGPGPGGRGRGRGQ). Gly residues predominate over residues 345-360 (NPGGPGPGGRGRGRGQ). The KH 4 domain occupies 371–438 (LQEFNFIVPT…QQIDYARQLI (68 aa)). The residue at position 427 (T427) is a Phosphothreonine. Disordered stretches follow at residues 442–527 (IGGP…GTDP) and 543–574 (QAQP…PAGQ). Over residues 463–500 (PHGPPGPPGPGTPMGPYNPAPYNPGPPGPAPHGPPAPY) the composition is skewed to pro residues. Positions 551–568 (PAGAPTTTQTNGQGDQQN) are enriched in low complexity. Residue S625 is modified to Phosphoserine.

In terms of assembly, found in a complex with PUF60 and far upstream element (FUSE) DNA segment. Interacts with PUF60 and JTV1. In terms of processing, ubiquitinated. This targets the protein for proteasome-mediated degradation.

It is found in the nucleus. Functionally, regulates MYC expression by binding to a single-stranded far-upstream element (FUSE) upstream of the MYC promoter. May act both as activator and repressor of transcription. The chain is Far upstream element-binding protein 1 from Rattus norvegicus (Rat).